The following is a 185-amino-acid chain: Peroxynitrite isomerase (185 aa).

Residues 1-21 (MHHPARELPFPDALRPGARPA) form a disordered region. Residues 34-40 (GTWRGTG) carry the GXWXGXG motif. Heme b is bound at residue histidine 171.

The protein belongs to the nitrobindin family. In terms of assembly, homodimer. Heme b is required as a cofactor.

The catalysed reaction is peroxynitrite = nitrate. It functions in the pathway nitrogen metabolism. In terms of biological role, heme-binding protein able to scavenge peroxynitrite and to protect free L-tyrosine against peroxynitrite-mediated nitration, by acting as a peroxynitrite isomerase that converts peroxynitrite to nitrate. Therefore, this protein likely plays a role in peroxynitrite sensing and in the detoxification of reactive nitrogen and oxygen species (RNS and ROS, respectively). Is able to bind nitric oxide (NO) in vitro, but may act as a sensor of peroxynitrite levels in vivo. This is Peroxynitrite isomerase from Streptomyces griseus subsp. griseus (strain JCM 4626 / CBS 651.72 / NBRC 13350 / KCC S-0626 / ISP 5235).